The sequence spans 20 residues: Antifungal protein (20 aa).

Belongs to the protease inhibitor I3 (leguminous Kunitz-type inhibitor) family.

Functionally, inhibits soybean trypsin. Has antifungal activity against R.cerealis, A.brassicae and A.niger, and weak antifungal activity against F.oxysporum. This Cullen corylifolium (Malaysian scurfpea) protein is Antifungal protein.